Here is a 260-residue protein sequence, read N- to C-terminus: 1-(5-phosphoribosyl)-5-[(5-phosphoribosylamino)methylideneamino] imidazole-4-carboxamide isomerase (260 aa).

Asp8 functions as the Proton acceptor in the catalytic mechanism. Asp130 acts as the Proton donor in catalysis.

The protein belongs to the HisA/HisF family.

Its subcellular location is the cytoplasm. It catalyses the reaction 1-(5-phospho-beta-D-ribosyl)-5-[(5-phospho-beta-D-ribosylamino)methylideneamino]imidazole-4-carboxamide = 5-[(5-phospho-1-deoxy-D-ribulos-1-ylimino)methylamino]-1-(5-phospho-beta-D-ribosyl)imidazole-4-carboxamide. It participates in amino-acid biosynthesis; L-histidine biosynthesis; L-histidine from 5-phospho-alpha-D-ribose 1-diphosphate: step 4/9. This chain is 1-(5-phosphoribosyl)-5-[(5-phosphoribosylamino)methylideneamino] imidazole-4-carboxamide isomerase, found in Chlorobaculum tepidum (strain ATCC 49652 / DSM 12025 / NBRC 103806 / TLS) (Chlorobium tepidum).